Reading from the N-terminus, the 449-residue chain is MATRHQRAAAAPQPANRGAAVAAGKQKAAATAAAGRPGARNRQALGDIGNVLNAHVVDGKIQLPEGINRPITRSFGAQLLKKAQENAVAANKIVVQNPARKEPAPKPAKKVVPRPENAAKASTGAGVNENKKPSESEGAGSSSGGSALKYSRKKVVNTLTSVLTARSKHACGITEKPKEVVEDIDKLDGDNQLAVVEYIEDIYNFYRTAQLERRPTDYMSSQVEVNPKMRAILADWIIDVHYKFELMPETLYLTMYVIDRYLSLQPVLRRELQLVGVAAMLIASKYEEMWAPEVQDLIHVCDNAYSRQHILAMEKNILNRLQWNITVPTPYVFLLRFIKAAGGDKELENMVFFFSEMALKEYGMASLCPSLVAASAVYAAQCTLKRSPLWTSTLKHHTGFTESQLRECAKVLVNAHAAAPESKLKTAYRKYASEQLGRVSLRPPAVCLA.

2 disordered regions span residues Met1–Pro37 and Pro98–Ala147. Low complexity-rich tracts occupy residues Ala8 to Pro37 and Ser136 to Ala147.

This sequence belongs to the cyclin family. Cyclin AB subfamily.

The chain is Cyclin-B1-5 (CYCB1-5) from Oryza sativa subsp. japonica (Rice).